A 274-amino-acid chain; its full sequence is Halorhodopsin (274 aa).

The propeptide occupies 1-21; it reads MSITSVPGVVDAGVLGAQSAA. Topologically, residues 22–25 are extracellular; the sequence is AVRE. A helical transmembrane segment spans residues 26–51; sequence NALLSSSLWVNVALAGIAILVFVYMG. Over 52-57 the chain is Cytoplasmic; sequence RTIRPG. A helical membrane pass occupies residues 58–81; sequence RPRLIWGATLMIPLVSISSYLGLL. At 82–105 the chain is on the extracellular side; sequence SGLTVGMIEMPAGHALAGEMVRSQ. Positions 105, 111, and 115 each coordinate chloride. A helical membrane pass occupies residues 106–127; the sequence is WGRYLTWALSTPMILLALGLLA. Over 128–130 the chain is Cytoplasmic; that stretch reads DVD. A helical transmembrane segment spans residues 131–154; it reads LGSLFTVIAADIGMCVTGLAAAMT. Topologically, residues 155-157 are extracellular; that stretch reads TSA. The helical transmembrane segment at 158-180 threads the bilayer; it reads LLFRWAFYAISCAFFVVVLSALV. Topologically, residues 181–192 are cytoplasmic; the sequence is TDWAASASSAGT. The chain crosses the membrane as a helical span at residues 193–216; that stretch reads AEIFDTLRVLTVVLWLGYPIVWAV. At 217-226 the chain is on the extracellular side; sequence GVEGLALVQS. A helical membrane pass occupies residues 227–255; it reads VGVTSWAYSVLDVFAKYVFAFILLRWVAN. N6-(retinylidene)lysine is present on K242. Topologically, residues 256-274 are cytoplasmic; sequence NERTVAVAGQTLGTMSSDD.

The protein belongs to the archaeal/bacterial/fungal opsin family. Homotrimer.

It localises to the cell membrane. Functionally, light-driven chloride pump. This is Halorhodopsin (hop) from Halobacterium salinarum (strain ATCC 29341 / DSM 671 / R1).